The following is a 399-amino-acid chain: Serine palmitoyltransferase (399 aa).

Pyridoxal 5'-phosphate-binding positions include 113-114, His213, Thr241, and Ser243; that span reads GF. Lys244 carries the N6-(pyridoxal phosphate)lysine modification.

This sequence belongs to the class-II pyridoxal-phosphate-dependent aminotransferase family. In terms of assembly, homodimer. Pyridoxal 5'-phosphate serves as cofactor.

The protein resides in the cytoplasm. It carries out the reaction L-serine + hexadecanoyl-CoA + H(+) = 3-oxosphinganine + CO2 + CoA. Its pathway is lipid metabolism; sphingolipid metabolism. Functionally, catalyzes the condensation of L-serine with palmitoyl-CoA (hexadecanoyl-CoA) to produce 3-oxosphinganine. The polypeptide is Serine palmitoyltransferase (Sphingobacterium spiritivorum (Flavobacterium spiritivorum)).